The sequence spans 327 residues: Undecaprenyl-phosphate 4-deoxy-4-formamido-L-arabinose transferase (327 aa).

The Cytoplasmic segment spans residues 1–235; sequence MFDAAPIKKV…TCLTTTPLRL (235 aa). The chain crosses the membrane as a helical span at residues 236–256; it reads LSLLGSVIAIGGFSLSVLLIV. Topologically, residues 257–269 are periplasmic; the sequence is LRLALGPQWAAEG. The helical transmembrane segment at 270-290 threads the bilayer; it reads VFMLFAVLFTFIGAQFIGMGL. Over 291–327 the chain is Cytoplasmic; it reads LGEYIGRIYNDVRARPRYFVQQVIYPESTSFTEESHQ.

Belongs to the glycosyltransferase 2 family.

The protein localises to the cell inner membrane. It carries out the reaction UDP-4-deoxy-4-formamido-beta-L-arabinose + di-trans,octa-cis-undecaprenyl phosphate = 4-deoxy-4-formamido-alpha-L-arabinopyranosyl di-trans,octa-cis-undecaprenyl phosphate + UDP. It functions in the pathway glycolipid biosynthesis; 4-amino-4-deoxy-alpha-L-arabinose undecaprenyl phosphate biosynthesis; 4-amino-4-deoxy-alpha-L-arabinose undecaprenyl phosphate from UDP-4-deoxy-4-formamido-beta-L-arabinose and undecaprenyl phosphate: step 1/2. It participates in bacterial outer membrane biogenesis; lipopolysaccharide biosynthesis. Functionally, catalyzes the transfer of 4-deoxy-4-formamido-L-arabinose from UDP to undecaprenyl phosphate. The modified arabinose is attached to lipid A and is required for resistance to polymyxin and cationic antimicrobial peptides. This chain is Undecaprenyl-phosphate 4-deoxy-4-formamido-L-arabinose transferase, found in Salmonella paratyphi A (strain ATCC 9150 / SARB42).